Reading from the N-terminus, the 156-residue chain is Probable cyclic pyranopterin monophosphate synthase (156 aa).

Substrate-binding positions include 73 to 75 (MCH) and 109 to 110 (ME). Residue aspartate 124 is part of the active site.

The protein belongs to the MoaC family. In terms of assembly, homohexamer; trimer of dimers.

It catalyses the reaction (8S)-3',8-cyclo-7,8-dihydroguanosine 5'-triphosphate = cyclic pyranopterin phosphate + diphosphate. Its pathway is cofactor biosynthesis; molybdopterin biosynthesis. Catalyzes the conversion of (8S)-3',8-cyclo-7,8-dihydroguanosine 5'-triphosphate to cyclic pyranopterin monophosphate (cPMP). The protein is Probable cyclic pyranopterin monophosphate synthase of Archaeoglobus fulgidus (strain ATCC 49558 / DSM 4304 / JCM 9628 / NBRC 100126 / VC-16).